A 206-amino-acid polypeptide reads, in one-letter code: Large ribosomal subunit protein uL4 (206 aa).

The interval 46 to 78 (GNRAQKDREQVKHTTKKPWRQKGTGRARAGMSS) is disordered. Over residues 58–70 (HTTKKPWRQKGTG) the composition is skewed to basic residues.

The protein belongs to the universal ribosomal protein uL4 family. As to quaternary structure, part of the 50S ribosomal subunit.

In terms of biological role, one of the primary rRNA binding proteins, this protein initially binds near the 5'-end of the 23S rRNA. It is important during the early stages of 50S assembly. It makes multiple contacts with different domains of the 23S rRNA in the assembled 50S subunit and ribosome. Functionally, forms part of the polypeptide exit tunnel. The sequence is that of Large ribosomal subunit protein uL4 from Burkholderia lata (strain ATCC 17760 / DSM 23089 / LMG 22485 / NCIMB 9086 / R18194 / 383).